A 453-amino-acid polypeptide reads, in one-letter code: Bifunctional protein GlmU (453 aa).

The segment at 1-231 is pyrophosphorylase; sequence MERTCLAVIL…EIEMTGCNTR (231 aa). Residues 10–13, K24, Q77, 82–83, 105–107, G143, E157, N172, and N229 contribute to the UDP-N-acetyl-alpha-D-glucosamine site; these read LAAG, GT, and YGD. D107 is a binding site for Mg(2+). N229 is a binding site for Mg(2+). The segment at 232–252 is linker; sequence AELAVIERFWQERRRHQMMLS. The segment at 253 to 453 is N-acetyltransferase; it reads GVTMIAPETV…AIKAAKKAKA (201 aa). Residues R318 and K336 each contribute to the UDP-N-acetyl-alpha-D-glucosamine site. Residue H348 is the Proton acceptor of the active site. Residues Y351 and N362 each coordinate UDP-N-acetyl-alpha-D-glucosamine. Residues A365, 371 to 372, S390, S408, and R425 contribute to the acetyl-CoA site; that span reads NY.

This sequence in the N-terminal section; belongs to the N-acetylglucosamine-1-phosphate uridyltransferase family. It in the C-terminal section; belongs to the transferase hexapeptide repeat family. In terms of assembly, homotrimer. Requires Mg(2+) as cofactor.

Its subcellular location is the cytoplasm. It carries out the reaction alpha-D-glucosamine 1-phosphate + acetyl-CoA = N-acetyl-alpha-D-glucosamine 1-phosphate + CoA + H(+). The enzyme catalyses N-acetyl-alpha-D-glucosamine 1-phosphate + UTP + H(+) = UDP-N-acetyl-alpha-D-glucosamine + diphosphate. The protein operates within nucleotide-sugar biosynthesis; UDP-N-acetyl-alpha-D-glucosamine biosynthesis; N-acetyl-alpha-D-glucosamine 1-phosphate from alpha-D-glucosamine 6-phosphate (route II): step 2/2. Its pathway is nucleotide-sugar biosynthesis; UDP-N-acetyl-alpha-D-glucosamine biosynthesis; UDP-N-acetyl-alpha-D-glucosamine from N-acetyl-alpha-D-glucosamine 1-phosphate: step 1/1. It participates in bacterial outer membrane biogenesis; LPS lipid A biosynthesis. In terms of biological role, catalyzes the last two sequential reactions in the de novo biosynthetic pathway for UDP-N-acetylglucosamine (UDP-GlcNAc). The C-terminal domain catalyzes the transfer of acetyl group from acetyl coenzyme A to glucosamine-1-phosphate (GlcN-1-P) to produce N-acetylglucosamine-1-phosphate (GlcNAc-1-P), which is converted into UDP-GlcNAc by the transfer of uridine 5-monophosphate (from uridine 5-triphosphate), a reaction catalyzed by the N-terminal domain. In Rhizobium johnstonii (strain DSM 114642 / LMG 32736 / 3841) (Rhizobium leguminosarum bv. viciae), this protein is Bifunctional protein GlmU.